The primary structure comprises 124 residues: Large ribosomal subunit protein bL12 (124 aa).

The protein belongs to the bacterial ribosomal protein bL12 family. In terms of assembly, homodimer. Part of the ribosomal stalk of the 50S ribosomal subunit. Forms a multimeric L10(L12)X complex, where L10 forms an elongated spine to which 2 to 4 L12 dimers bind in a sequential fashion. Binds GTP-bound translation factors.

Forms part of the ribosomal stalk which helps the ribosome interact with GTP-bound translation factors. Is thus essential for accurate translation. This chain is Large ribosomal subunit protein bL12, found in Borreliella afzelii (strain PKo) (Borrelia afzelii).